A 260-amino-acid chain; its full sequence is Capsid protein (260 aa).

A Bipartite nuclear localization signal motif is present at residues 3-20 (KRPGDIIISTPVSKVRRR). The short motif at 41–55 (KRRSWTYRPMYRKPR) is the Nuclear localization signal element. The segment at 69-86 (CEGPCKVQSYEQRDDIKH) is a zinc-finger region. Residues 102-123 (ITHRVGKRFCVKSIYFLGKVWM) carry the Nuclear export signal motif. A Bipartite nuclear localization signal motif is present at residues 202 to 251 (KRFFKINSHVTLFIFIQEAAKYENHTENALLLYMACTHASNPVYATMKIR).

The protein belongs to the geminiviridae capsid protein family. As to quaternary structure, homomultimer. Binds to single-stranded and double-stranded viral DNA. Interacts (via nuclear localization signals) with host importin alpha-1a.

It is found in the virion. Its subcellular location is the host nucleus. Functionally, encapsidates the viral genome into characteristic twinned ('geminate') particles. Binds the genomic viral ssDNA and shuttles it into and out of the cell nucleus. Plays a role in protection of the genome from degradation, virus acquisition and transmission by insect vectors, infectivity, and systemic movement. The CP of monopartite geminiviruses is absolutely essential for virus movement. The polypeptide is Capsid protein (Cynanchum acutum (Little mallow)).